Here is a 637-residue protein sequence, read N- to C-terminus: DNA mismatch repair protein MutL (637 aa).

Polar residues predominate over residues Gln-343–Pro-352. Positions Gln-343 to Pro-411 are disordered. The span at Ser-365–His-380 shows a compositional bias: basic and acidic residues. Residues Tyr-388–Ser-397 are compositionally biased toward low complexity.

The protein belongs to the DNA mismatch repair MutL/HexB family.

Its function is as follows. This protein is involved in the repair of mismatches in DNA. It is required for dam-dependent methyl-directed DNA mismatch repair. May act as a 'molecular matchmaker', a protein that promotes the formation of a stable complex between two or more DNA-binding proteins in an ATP-dependent manner without itself being part of a final effector complex. The protein is DNA mismatch repair protein MutL of Shewanella halifaxensis (strain HAW-EB4).